Consider the following 741-residue polypeptide: uncharacterized protein (741 aa).

Residues 1–17 (MDSNTNENNSHASSNER) show a composition bias toward polar residues. Residues 1 to 50 (MDSNTNENNSHASSNERQSSEGHDDYLNRNPNSEATEGEEGTHPTTGTQP) form a disordered region. Residues 18–27 (QSSEGHDDYL) are compositionally biased toward basic and acidic residues. The segment at 107–150 (CPICYDDMNENDEKQATKMPCGHIFGKNCLQKWLENHCTCPLCR) adopts an RING-type 1; degenerate zinc-finger fold. 3 stretches are compositionally biased toward polar residues: residues 177–193 (GNQG…SNGV), 252–263 (PDSNTSTPTTRS), and 277–302 (NASS…NAFF). Disordered stretches follow at residues 177–214 (GNQG…RTGV), 238–387 (SATN…NTNR), 500–543 (QPAV…PGIT), 561–619 (ENRM…TPTH), 638–688 (STPS…PQCQ), and 713–741 (RCQQ…EEHK). The segment covering 316–332 (TSNLTSNSGSMTNSTST) has biased composition (low complexity). Polar residues-rich tracts occupy residues 333–344 (DLPTSNLPSQNA) and 357–386 (PPNL…ANTN). Composition is skewed to polar residues over residues 563–586 (RMNQ…SINV), 604–619 (ENSS…TPTH), and 652–661 (SKVSSGTSTP). An RING-type 2; degenerate zinc finger spans residues 687–736 (CQLEDQGICDPNDRFVHFECGHSVHERCQQSTSNSENQMDEEIGECPKCR). Residues 731 to 741 (ECPKCRNEEHK) are compositionally biased toward basic and acidic residues.

Its subcellular location is the nucleus. This is an uncharacterized protein from Schizosaccharomyces pombe (strain 972 / ATCC 24843) (Fission yeast).